A 460-amino-acid polypeptide reads, in one-letter code: Argininosuccinate lyase (460 aa).

This sequence belongs to the lyase 1 family. Argininosuccinate lyase subfamily.

Its subcellular location is the cytoplasm. The catalysed reaction is 2-(N(omega)-L-arginino)succinate = fumarate + L-arginine. Its pathway is amino-acid biosynthesis; L-arginine biosynthesis; L-arginine from L-ornithine and carbamoyl phosphate: step 3/3. In Nitratidesulfovibrio vulgaris (strain ATCC 29579 / DSM 644 / CCUG 34227 / NCIMB 8303 / VKM B-1760 / Hildenborough) (Desulfovibrio vulgaris), this protein is Argininosuccinate lyase.